A 325-amino-acid chain; its full sequence is Beta-ketoacyl-[acyl-carrier-protein] synthase III (325 aa).

Active-site residues include Cys-112 and His-250. Residues 251-255 are ACP-binding; that stretch reads QANIR. Asn-280 is a catalytic residue.

It belongs to the thiolase-like superfamily. FabH family. As to quaternary structure, homodimer.

The protein resides in the cytoplasm. It carries out the reaction malonyl-[ACP] + acetyl-CoA + H(+) = 3-oxobutanoyl-[ACP] + CO2 + CoA. It functions in the pathway lipid metabolism; fatty acid biosynthesis. Its function is as follows. Catalyzes the condensation reaction of fatty acid synthesis by the addition to an acyl acceptor of two carbons from malonyl-ACP. Catalyzes the first condensation reaction which initiates fatty acid synthesis and may therefore play a role in governing the total rate of fatty acid production. Possesses both acetoacetyl-ACP synthase and acetyl transacylase activities. Its substrate specificity determines the biosynthesis of branched-chain and/or straight-chain of fatty acids. This Streptococcus mutans serotype c (strain ATCC 700610 / UA159) protein is Beta-ketoacyl-[acyl-carrier-protein] synthase III.